A 139-amino-acid polypeptide reads, in one-letter code: Protein archease (139 aa).

Ca(2+)-binding residues include Asp-12, Asp-138, and Ile-139.

The protein belongs to the archease family.

Functionally, activates the tRNA-splicing ligase complex by facilitating the enzymatic turnover of catalytic subunit RtcB. Acts by promoting the guanylylation of RtcB, a key intermediate step in tRNA ligation. Can also alter the NTP specificity of RtcB such that ATP, dGTP or ITP is used efficiently. This chain is Protein archease, found in Sulfurisphaera tokodaii (strain DSM 16993 / JCM 10545 / NBRC 100140 / 7) (Sulfolobus tokodaii).